We begin with the raw amino-acid sequence, 307 residues long: Stage III sporulation protein AA (307 aa).

143–150 contacts ATP; that stretch reads GPPQTGKT.

This Bacillus subtilis (strain 168) protein is Stage III sporulation protein AA (spoIIIAA).